A 347-amino-acid polypeptide reads, in one-letter code: 3-methyl-2-oxobutanoate hydroxymethyltransferase 1, mitochondrial (347 aa).

A mitochondrion-targeting transit peptide spans 1–48 (MASSLTRNCSRFSKAISVRFMSNLPENTVYGGPKPQNPNQRVTLTHLR). Aspartate 83 and aspartate 122 together coordinate Mg(2+). Residues 83-84 (DS), aspartate 122, and lysine 152 each bind 3-methyl-2-oxobutanoate. Position 154 (glutamate 154) interacts with Mg(2+). Residue glutamate 222 is the Proton acceptor of the active site.

It belongs to the PanB family. Mg(2+) serves as cofactor.

It localises to the mitochondrion. It catalyses the reaction 3-methyl-2-oxobutanoate + (6R)-5,10-methylene-5,6,7,8-tetrahydrofolate + H2O = 2-dehydropantoate + (6S)-5,6,7,8-tetrahydrofolate. The protein operates within cofactor biosynthesis; (R)-pantothenate biosynthesis; (R)-pantoate from 3-methyl-2-oxobutanoate: step 1/2. In terms of biological role, catalyzes the reversible reaction in which hydroxymethyl group from 5,10-methylenetetrahydrofolate is transferred onto alpha-ketoisovalerate to form ketopantoate. This Arabidopsis thaliana (Mouse-ear cress) protein is 3-methyl-2-oxobutanoate hydroxymethyltransferase 1, mitochondrial (KPHMT1).